Reading from the N-terminus, the 101-residue chain is MINEIIRESKDKNGILIDVEISSNAKKNEIGEINEWRKRLIIKIKALPVDGKANKEIAKFFKKTFGKDIIIVSGLTSSQKTICVIGATKDEIIDKILKNNI.

It belongs to the UPF0235 family.

The protein is UPF0235 protein Maeo_0841 of Methanococcus aeolicus (strain ATCC BAA-1280 / DSM 17508 / OCM 812 / Nankai-3).